Reading from the N-terminus, the 256-residue chain is Phosphomannomutase (256 aa).

Residue Asp-12 is the Nucleophile of the active site. The Mg(2+) site is built by Asp-12 and Asp-14. Residue Asp-14 is the Proton donor/acceptor of the active site. Positions 21, 123, 134, 141, 179, and 181 each coordinate alpha-D-mannose 1-phosphate. Asp-209 is a Mg(2+) binding site.

Belongs to the eukaryotic PMM family. In terms of assembly, homodimer.

It is found in the cytoplasm. The enzyme catalyses alpha-D-mannose 1-phosphate = D-mannose 6-phosphate. Its pathway is nucleotide-sugar biosynthesis; GDP-alpha-D-mannose biosynthesis; alpha-D-mannose 1-phosphate from D-fructose 6-phosphate: step 2/2. In terms of biological role, involved in the synthesis of the GDP-mannose and dolichol-phosphate-mannose required for a number of critical mannosyl transfer reactions. This is Phosphomannomutase (SEC53) from Encephalitozoon cuniculi (strain GB-M1) (Microsporidian parasite).